Consider the following 353-residue polypeptide: Methionine import ATP-binding protein MetN (353 aa).

The ABC transporter domain occupies L8 to I249. G42–S49 provides a ligand contact to ATP.

Belongs to the ABC transporter superfamily. Methionine importer (TC 3.A.1.24) family. In terms of assembly, the complex is composed of two ATP-binding proteins (MetN), two transmembrane proteins (MetI) and a solute-binding protein (MetQ).

The protein resides in the cell membrane. The catalysed reaction is L-methionine(out) + ATP + H2O = L-methionine(in) + ADP + phosphate + H(+). It catalyses the reaction D-methionine(out) + ATP + H2O = D-methionine(in) + ADP + phosphate + H(+). In terms of biological role, part of the ABC transporter complex MetNIQ involved in methionine import. Responsible for energy coupling to the transport system. This Streptococcus pneumoniae (strain ATCC BAA-255 / R6) protein is Methionine import ATP-binding protein MetN.